The sequence spans 333 residues: L-lactate dehydrogenase A chain (333 aa).

Residues 30 to 58 (GMVG…MEDK) and arginine 100 contribute to the NAD(+) site. Substrate is bound by residues arginine 107, asparagine 139, and arginine 170. Residue asparagine 139 coordinates NAD(+). Histidine 194 (proton acceptor) is an active-site residue. Threonine 249 contacts substrate.

Belongs to the LDH/MDH superfamily. LDH family. As to quaternary structure, homotetramer.

The protein localises to the cytoplasm. The enzyme catalyses (S)-lactate + NAD(+) = pyruvate + NADH + H(+). Its pathway is fermentation; pyruvate fermentation to lactate; (S)-lactate from pyruvate: step 1/1. The polypeptide is L-lactate dehydrogenase A chain (ldha) (Cyprinus carpio (Common carp)).